Consider the following 308-residue polypeptide: Elongation factor Ts (308 aa).

The involved in Mg(2+) ion dislocation from EF-Tu stretch occupies residues 80–83 (TDFV).

Belongs to the EF-Ts family.

The protein resides in the cytoplasm. Associates with the EF-Tu.GDP complex and induces the exchange of GDP to GTP. It remains bound to the aminoacyl-tRNA.EF-Tu.GTP complex up to the GTP hydrolysis stage on the ribosome. In Verminephrobacter eiseniae (strain EF01-2), this protein is Elongation factor Ts.